The primary structure comprises 465 residues: Fumarate hydratase class II (465 aa).

Substrate is bound by residues 99-101, 130-133, 140-142, and T188; these read SGT, HPND, and STN. H189 serves as the catalytic Proton donor/acceptor. S319 is an active-site residue. Substrate is bound by residues S320 and 325 to 327; that span reads KVN.

Belongs to the class-II fumarase/aspartase family. Fumarase subfamily. In terms of assembly, homotetramer.

The protein resides in the cytoplasm. It carries out the reaction (S)-malate = fumarate + H2O. It participates in carbohydrate metabolism; tricarboxylic acid cycle; (S)-malate from fumarate: step 1/1. In terms of biological role, involved in the TCA cycle. Catalyzes the stereospecific interconversion of fumarate to L-malate. This is Fumarate hydratase class II from Prochlorococcus marinus (strain SARG / CCMP1375 / SS120).